We begin with the raw amino-acid sequence, 197 residues long: Pyridoxal 5'-phosphate synthase subunit PdxT (197 aa).

Position 53–55 (53–55 (GES)) interacts with L-glutamine. The active-site Nucleophile is the C85. L-glutamine-binding positions include R114 and 142 to 143 (IR). Residues H179 and E181 each act as charge relay system in the active site.

Belongs to the glutaminase PdxT/SNO family. In the presence of PdxS, forms a dodecamer of heterodimers. Only shows activity in the heterodimer.

The enzyme catalyses aldehydo-D-ribose 5-phosphate + D-glyceraldehyde 3-phosphate + L-glutamine = pyridoxal 5'-phosphate + L-glutamate + phosphate + 3 H2O + H(+). The catalysed reaction is L-glutamine + H2O = L-glutamate + NH4(+). Its pathway is cofactor biosynthesis; pyridoxal 5'-phosphate biosynthesis. Functionally, catalyzes the hydrolysis of glutamine to glutamate and ammonia as part of the biosynthesis of pyridoxal 5'-phosphate. The resulting ammonia molecule is channeled to the active site of PdxS. The protein is Pyridoxal 5'-phosphate synthase subunit PdxT of Thermococcus kodakarensis (strain ATCC BAA-918 / JCM 12380 / KOD1) (Pyrococcus kodakaraensis (strain KOD1)).